A 337-amino-acid polypeptide reads, in one-letter code: ATP-dependent 6-phosphofructokinase (337 aa).

Position 11 (Gly-11) interacts with ATP. An ADP-binding site is contributed by Arg-21 to Arg-25. ATP contacts are provided by residues Arg-72–Tyr-73 and Gly-102–Ser-105. Position 103 (Asp-103) interacts with Mg(2+). Thr-125–Asp-127 serves as a coordination point for substrate. Asp-127 serves as the catalytic Proton acceptor. Position 154 (Arg-154) interacts with ADP. Substrate is bound by residues Arg-162 and Met-169–Arg-171. Residues Gly-185 to Asp-187 and Lys-214 to His-216 each bind ADP. Substrate-binding positions include Glu-223, Arg-245, and His-251 to Arg-254.

It belongs to the phosphofructokinase type A (PFKA) family. ATP-dependent PFK group I subfamily. Prokaryotic clade 'B1' sub-subfamily. Homotetramer. The cofactor is Mg(2+).

The protein resides in the cytoplasm. It carries out the reaction beta-D-fructose 6-phosphate + ATP = beta-D-fructose 1,6-bisphosphate + ADP + H(+). It functions in the pathway carbohydrate degradation; glycolysis; D-glyceraldehyde 3-phosphate and glycerone phosphate from D-glucose: step 3/4. Its activity is regulated as follows. Allosterically activated by ADP and other diphosphonucleosides, and allosterically inhibited by phosphoenolpyruvate. Catalyzes the phosphorylation of D-fructose 6-phosphate to fructose 1,6-bisphosphate by ATP, the first committing step of glycolysis. In Streptococcus mutans serotype c (strain ATCC 700610 / UA159), this protein is ATP-dependent 6-phosphofructokinase.